The chain runs to 239 residues: 1-(5-phosphoribosyl)-5-[(5-phosphoribosylamino)methylideneamino] imidazole-4-carboxamide isomerase (239 aa).

Asp-8 functions as the Proton acceptor in the catalytic mechanism. Catalysis depends on Asp-129, which acts as the Proton donor.

It belongs to the HisA/HisF family.

It localises to the cytoplasm. The catalysed reaction is 1-(5-phospho-beta-D-ribosyl)-5-[(5-phospho-beta-D-ribosylamino)methylideneamino]imidazole-4-carboxamide = 5-[(5-phospho-1-deoxy-D-ribulos-1-ylimino)methylamino]-1-(5-phospho-beta-D-ribosyl)imidazole-4-carboxamide. It participates in amino-acid biosynthesis; L-histidine biosynthesis; L-histidine from 5-phospho-alpha-D-ribose 1-diphosphate: step 4/9. The protein is 1-(5-phosphoribosyl)-5-[(5-phosphoribosylamino)methylideneamino] imidazole-4-carboxamide isomerase of Legionella pneumophila (strain Corby).